Reading from the N-terminus, the 729-residue chain is Fatty acid oxidation complex subunit alpha (729 aa).

The enoyl-CoA hydratase/isomerase stretch occupies residues 1 to 189; it reads MLYKGDTLYL…KVGLVDAVVK (189 aa). Position 296 (D296) interacts with substrate. A 3-hydroxyacyl-CoA dehydrogenase region spans residues 311–729; it reads ETPKQAAVLG…AQPVGELQTA (419 aa). NAD(+)-binding positions include M324, D343, 400–402, K407, and S429; that span reads VVE. H450 serves as the catalytic For 3-hydroxyacyl-CoA dehydrogenase activity. Position 453 (N453) interacts with NAD(+). Positions 500 and 660 each coordinate substrate. The segment at 708–729 is disordered; the sequence is SHNAPYYPQVEPAQPVGELQTA.

The protein in the N-terminal section; belongs to the enoyl-CoA hydratase/isomerase family. In the C-terminal section; belongs to the 3-hydroxyacyl-CoA dehydrogenase family. Heterotetramer of two alpha chains (FadB) and two beta chains (FadA).

It catalyses the reaction a (3S)-3-hydroxyacyl-CoA + NAD(+) = a 3-oxoacyl-CoA + NADH + H(+). It carries out the reaction a (3S)-3-hydroxyacyl-CoA = a (2E)-enoyl-CoA + H2O. The enzyme catalyses a 4-saturated-(3S)-3-hydroxyacyl-CoA = a (3E)-enoyl-CoA + H2O. The catalysed reaction is (3S)-3-hydroxybutanoyl-CoA = (3R)-3-hydroxybutanoyl-CoA. It catalyses the reaction a (3Z)-enoyl-CoA = a 4-saturated (2E)-enoyl-CoA. It carries out the reaction a (3E)-enoyl-CoA = a 4-saturated (2E)-enoyl-CoA. It participates in lipid metabolism; fatty acid beta-oxidation. In terms of biological role, involved in the aerobic and anaerobic degradation of long-chain fatty acids via beta-oxidation cycle. Catalyzes the formation of 3-oxoacyl-CoA from enoyl-CoA via L-3-hydroxyacyl-CoA. It can also use D-3-hydroxyacyl-CoA and cis-3-enoyl-CoA as substrate. The chain is Fatty acid oxidation complex subunit alpha from Cronobacter sakazakii (strain ATCC BAA-894) (Enterobacter sakazakii).